The primary structure comprises 236 residues: Purine nucleoside phosphorylase DeoD-type (236 aa).

Residue histidine 4 participates in a purine D-ribonucleoside binding. Phosphate is bound by residues glycine 20, arginine 24, arginine 43, and 87–90 (RVGT). A purine D-ribonucleoside-binding positions include 179–181 (EME) and 203–204 (SD). The active-site Proton donor is aspartate 204.

It belongs to the PNP/UDP phosphorylase family. As to quaternary structure, homohexamer; trimer of homodimers.

It carries out the reaction a purine D-ribonucleoside + phosphate = a purine nucleobase + alpha-D-ribose 1-phosphate. The enzyme catalyses a purine 2'-deoxy-D-ribonucleoside + phosphate = a purine nucleobase + 2-deoxy-alpha-D-ribose 1-phosphate. Catalyzes the reversible phosphorolytic breakdown of the N-glycosidic bond in the beta-(deoxy)ribonucleoside molecules, with the formation of the corresponding free purine bases and pentose-1-phosphate. In Streptococcus thermophilus (strain ATCC BAA-491 / LMD-9), this protein is Purine nucleoside phosphorylase DeoD-type.